The following is a 145-amino-acid chain: Procyclic form-specific polypeptide B-alpha (145 aa).

The N-terminal stretch at 1 to 27 (MAPRSLYLLAVLLFSANLFAGVGFAAA) is a signal peptide. The tract at residues 28–127 (AEGPEDKGLT…PEPEPGAATL (100 aa)) is disordered. The segment covering 31–52 (PEDKGLTKGGKGKGEKGTKVGA) has biased composition (basic and acidic residues). 32 consecutive repeat copies span residues 59 to 60 (DP), 61 to 62 (DP), 63 to 64 (EP), 65 to 66 (EP), 67 to 68 (EP), 69 to 70 (EP), 71 to 72 (EP), 73 to 74 (EP), 75 to 76 (EP), 77 to 78 (EP), 79 to 80 (EP), 81 to 82 (EP), 83 to 84 (EP), 85 to 86 (EP), 87 to 88 (EP), 89 to 90 (EP), 91 to 92 (EP), 93 to 94 (EP), 95 to 96 (EP), 97 to 98 (EP), 99 to 100 (EP), 101 to 102 (EP), 103 to 104 (EP), 105 to 106 (EP), 107 to 108 (EP), 109 to 110 (EP), 111 to 112 (EP), 113 to 114 (EP), 115 to 116 (EP), 117 to 118 (EP), 119 to 120 (EP), and 121 to 122 (EP). A 32 X 2 AA tandem repeats of [DE]-P region spans residues 59–122 (DPDPEPEPEP…EPEPEPEPEP (64 aa)). A compositionally biased stretch (acidic residues) spans 60–120 (PDPEPEPEPE…EPEPEPEPEP (61 aa)). Gly-123 carries GPI-anchor amidated glycine lipidation. Positions 124–145 (AATLKSVALPFAIAAAALVAAF) are excised as a propeptide.

The protein localises to the cell membrane. Functionally, major surface antigen of procyclic forms. This Trypanosoma brucei brucei protein is Procyclic form-specific polypeptide B-alpha (PARPB).